Here is a 369-residue protein sequence, read N- to C-terminus: Iron-sulfur cluster carrier protein (369 aa).

115 to 122 (GKGGVGKS) serves as a coordination point for ATP.

The protein belongs to the Mrp/NBP35 ATP-binding proteins family. In terms of assembly, homodimer. Holo-ApbC forms a mixture of homodimers and homotetramers.

Functionally, binds and transfers iron-sulfur (Fe-S) clusters to target apoproteins. Can hydrolyze ATP. Both activities are required for function in vivo, but the ability to hydrolyze ATP is not necessary for Fe-S cluster transfer. The sequence is that of Iron-sulfur cluster carrier protein from Salmonella typhimurium (strain LT2 / SGSC1412 / ATCC 700720).